A 211-amino-acid polypeptide reads, in one-letter code: Protein-L-isoaspartate O-methyltransferase (211 aa).

Serine 60 is an active-site residue.

It belongs to the methyltransferase superfamily. L-isoaspartyl/D-aspartyl protein methyltransferase family.

Its subcellular location is the cytoplasm. It carries out the reaction [protein]-L-isoaspartate + S-adenosyl-L-methionine = [protein]-L-isoaspartate alpha-methyl ester + S-adenosyl-L-homocysteine. Its function is as follows. Catalyzes the methyl esterification of L-isoaspartyl residues in peptides and proteins that result from spontaneous decomposition of normal L-aspartyl and L-asparaginyl residues. It plays a role in the repair and/or degradation of damaged proteins. In Pseudomonas paraeruginosa (strain DSM 24068 / PA7) (Pseudomonas aeruginosa (strain PA7)), this protein is Protein-L-isoaspartate O-methyltransferase.